A 400-amino-acid chain; its full sequence is Nicotinate phosphoribosyltransferase (400 aa).

Histidine 220 bears the Phosphohistidine; by autocatalysis mark.

This sequence belongs to the NAPRTase family. Transiently phosphorylated on a His residue during the reaction cycle. Phosphorylation strongly increases the affinity for substrates and increases the rate of nicotinate D-ribonucleotide production. Dephosphorylation regenerates the low-affinity form of the enzyme, leading to product release.

It carries out the reaction nicotinate + 5-phospho-alpha-D-ribose 1-diphosphate + ATP + H2O = nicotinate beta-D-ribonucleotide + ADP + phosphate + diphosphate. It functions in the pathway cofactor biosynthesis; NAD(+) biosynthesis; nicotinate D-ribonucleotide from nicotinate: step 1/1. Catalyzes the synthesis of beta-nicotinate D-ribonucleotide from nicotinate and 5-phospho-D-ribose 1-phosphate at the expense of ATP. The polypeptide is Nicotinate phosphoribosyltransferase (Citrobacter koseri (strain ATCC BAA-895 / CDC 4225-83 / SGSC4696)).